The following is a 242-amino-acid chain: Biosynthetic peptidoglycan transglycosylase (242 aa).

The helical transmembrane segment at 19-39 threads the bilayer; sequence LMVVLAVFWGGGIALFSVAPV.

The protein belongs to the glycosyltransferase 51 family.

It is found in the cell inner membrane. It catalyses the reaction [GlcNAc-(1-&gt;4)-Mur2Ac(oyl-L-Ala-gamma-D-Glu-L-Lys-D-Ala-D-Ala)](n)-di-trans,octa-cis-undecaprenyl diphosphate + beta-D-GlcNAc-(1-&gt;4)-Mur2Ac(oyl-L-Ala-gamma-D-Glu-L-Lys-D-Ala-D-Ala)-di-trans,octa-cis-undecaprenyl diphosphate = [GlcNAc-(1-&gt;4)-Mur2Ac(oyl-L-Ala-gamma-D-Glu-L-Lys-D-Ala-D-Ala)](n+1)-di-trans,octa-cis-undecaprenyl diphosphate + di-trans,octa-cis-undecaprenyl diphosphate + H(+). It functions in the pathway cell wall biogenesis; peptidoglycan biosynthesis. Its function is as follows. Peptidoglycan polymerase that catalyzes glycan chain elongation from lipid-linked precursors. The sequence is that of Biosynthetic peptidoglycan transglycosylase from Escherichia coli O17:K52:H18 (strain UMN026 / ExPEC).